The primary structure comprises 257 residues: Protein MoaE (257 aa).

NAD(+) is bound at residue 6–29; the sequence is VITGGGTGIGAACARLMHPAGERV. A disordered region spans residues 75 to 96; it reads LMSSSAAPAGWATAPPPRPATA. Residue Ser132 coordinates substrate. Tyr145 serves as the catalytic Proton acceptor.

This sequence belongs to the short-chain dehydrogenases/reductases (SDR) family.

Its function is as follows. Might catalyze the conversion of monoamine compounds or their metabolites. The chain is Protein MoaE (moaE) from Klebsiella aerogenes (Enterobacter aerogenes).